We begin with the raw amino-acid sequence, 355 residues long: Tetraacyldisaccharide 4'-kinase (355 aa).

49-56 (TAGGTGKT) contacts ATP.

Belongs to the LpxK family.

It carries out the reaction a lipid A disaccharide + ATP = a lipid IVA + ADP + H(+). Its pathway is glycolipid biosynthesis; lipid IV(A) biosynthesis; lipid IV(A) from (3R)-3-hydroxytetradecanoyl-[acyl-carrier-protein] and UDP-N-acetyl-alpha-D-glucosamine: step 6/6. Its function is as follows. Transfers the gamma-phosphate of ATP to the 4'-position of a tetraacyldisaccharide 1-phosphate intermediate (termed DS-1-P) to form tetraacyldisaccharide 1,4'-bis-phosphate (lipid IVA). In Chlorobium luteolum (strain DSM 273 / BCRC 81028 / 2530) (Pelodictyon luteolum), this protein is Tetraacyldisaccharide 4'-kinase.